The primary structure comprises 449 residues: GTPase Der (449 aa).

EngA-type G domains lie at 4–169 and 177–353; these read PIVA…PAGE and IQVA…EQHR. GTP contacts are provided by residues 10–17, 57–61, 120–123, 183–190, 230–234, and 295–298; these read GRPNVGKS, DTGGL, NKCE, DTAGI, and NKWD. The KH-like domain maps to 354-439; the sequence is RRVTTAVVND…PIRLLWRSKK (86 aa).

Belongs to the TRAFAC class TrmE-Era-EngA-EngB-Septin-like GTPase superfamily. EngA (Der) GTPase family. As to quaternary structure, associates with the 50S ribosomal subunit.

GTPase that plays an essential role in the late steps of ribosome biogenesis. The chain is GTPase Der from Thermosynechococcus vestitus (strain NIES-2133 / IAM M-273 / BP-1).